The following is a 165-amino-acid chain: UPF0179 protein Igni_1272 (165 aa).

The protein belongs to the UPF0179 family.

This is UPF0179 protein Igni_1272 from Ignicoccus hospitalis (strain KIN4/I / DSM 18386 / JCM 14125).